We begin with the raw amino-acid sequence, 313 residues long: Protoheme IX farnesyltransferase (313 aa).

Transmembrane regions (helical) follow at residues 29–49 (VISL…RGWP), 57–77 (LWLL…AGVF), 101–123 (LISS…VMLW), 124–144 (VWGT…YVVI), 157–177 (IVIG…AVTG), 185–205 (YLFA…ALMI), 225–245 (MTVA…LMPV), 247–267 (FGAV…WLLW), and 287–307 (AVPL…AGAI).

Belongs to the UbiA prenyltransferase family. Protoheme IX farnesyltransferase subfamily.

Its subcellular location is the cell membrane. The catalysed reaction is heme b + (2E,6E)-farnesyl diphosphate + H2O = Fe(II)-heme o + diphosphate. It participates in porphyrin-containing compound metabolism; heme O biosynthesis; heme O from protoheme: step 1/1. Functionally, converts heme B (protoheme IX) to heme O by substitution of the vinyl group on carbon 2 of heme B porphyrin ring with a hydroxyethyl farnesyl side group. In Deinococcus radiodurans (strain ATCC 13939 / DSM 20539 / JCM 16871 / CCUG 27074 / LMG 4051 / NBRC 15346 / NCIMB 9279 / VKM B-1422 / R1), this protein is Protoheme IX farnesyltransferase.